The primary structure comprises 21 residues: Cyanophlyctin (21 aa).

Expressed by the skin glands.

The protein resides in the secreted. In terms of biological role, has antibacterial activity against E.coli HP101BA (MIC=6.4 uM), K.pneumoniae PTCC1388 (MIC=7.3 uM), M.luteus PTCC1625 (MIC=4.7 uM) and S.aureus PTCC1431 (MIC=5.3 uM). Has no or very limited (&lt;3%) hemolytic activity at concentrations of 15 ug/ml and 60 ug/ml, respectively. This Euphlyctis cyanophlyctis (Skittering frog) protein is Cyanophlyctin.